The following is a 217-amino-acid chain: MSAVKPLEAVARDRVGKGAARAVRRQGRVPAVIYGGGQSPQSISLDANQTHHLIYGGGFLSTVFEIAVDGRTIRAIPRDYQLDPVKDTPLHVDFLRVVSGQTIEVEVPVHFVNQDAAPGLKQKSGTLNVVLHTITLAVSPDAIPDAVNVDLTGKDIGDTVHVSDLVLPTGASLALAPSETVATLVPPTKLGADVEAEEAAVAEAARAGSAAEAAKEG.

It belongs to the bacterial ribosomal protein bL25 family. CTC subfamily. As to quaternary structure, part of the 50S ribosomal subunit; part of the 5S rRNA/L5/L18/L25 subcomplex. Contacts the 5S rRNA. Binds to the 5S rRNA independently of L5 and L18.

Functionally, this is one of the proteins that binds to the 5S RNA in the ribosome where it forms part of the central protuberance. The protein is Large ribosomal subunit protein bL25 of Methylobacterium sp. (strain 4-46).